Here is a 334-residue protein sequence, read N- to C-terminus: Nucleoid-associated protein SG1574 (334 aa).

It belongs to the YejK family.

Its subcellular location is the cytoplasm. It is found in the nucleoid. This chain is Nucleoid-associated protein SG1574, found in Sodalis glossinidius (strain morsitans).